The primary structure comprises 197 residues: Thymidine kinase (197 aa).

ATP contacts are provided by residues 15-22 and 93-96; these read GPMFAGKT and DEVQ. Glutamate 94 functions as the Proton acceptor in the catalytic mechanism. Cysteine 150, cysteine 153, cysteine 188, and histidine 191 together coordinate Zn(2+).

This sequence belongs to the thymidine kinase family. In terms of assembly, homotetramer.

It localises to the cytoplasm. The catalysed reaction is thymidine + ATP = dTMP + ADP + H(+). The chain is Thymidine kinase from Thermococcus kodakarensis (strain ATCC BAA-918 / JCM 12380 / KOD1) (Pyrococcus kodakaraensis (strain KOD1)).